The following is a 262-amino-acid chain: uncharacterized protein (262 aa).

The 211-residue stretch at 1–211 folds into the Radical SAM core domain; it reads MAFHVMIIPS…LLYLLDSYLE (211 aa). [4Fe-4S] cluster is bound by residues C13, C17, and C20.

Belongs to the radical SAM superfamily. Anaerobic sulfatase-maturating enzyme family. [4Fe-4S] cluster is required as a cofactor.

This is an uncharacterized protein from Methanothermobacter thermautotrophicus (strain ATCC 29096 / DSM 1053 / JCM 10044 / NBRC 100330 / Delta H) (Methanobacterium thermoautotrophicum).